The chain runs to 2641 residues: Inverse autotransporter adhesin YeeJ (2641 aa).

An N-terminal signal peptide occupies residues Met1–Ala26. One can recognise a LysM domain in the interval Val50–Val98. A disordered region spans residues Pro99–Leu118. Positions Thr125 to Asn400 are inverse autotransporter. Positions Gln513 to Val605 are invasin 3 domain. 17 Big-1 domains span residues His617–Ile711, Ile721–Val815, Gln822–Ile913, Ala920–Val1017, Val1024–Ala1116, Gln1123–Val1220, Val1227–Ala1319, Gln1326–Val1423, Gln1430–Ile1523, Ile1531–Val1633, His1641–Val1734, Glu1741–Thr1837, Gln1844–Ile1941, Lys1948–Val2032, Phe2048–Ile2139, Lys2142–Thr2236, and Val2244–Val2336. A C-type lectin domain region spans residues Lys2538–Leu2641.

The protein belongs to the intimin/invasin family.

It localises to the cell outer membrane. Functionally, a probable inverse autotransporter, it may be involved in biofilm formation and cell adhesion. May bind peptidoglycan via its LysM domain. Upon overexpression shows increased mature biofilm formation. This Escherichia coli O17:K52:H18 (strain UMN026 / ExPEC) protein is Inverse autotransporter adhesin YeeJ.